Here is a 238-residue protein sequence, read N- to C-terminus: Uridylate kinase (238 aa).

12–15 (KLSG) serves as a coordination point for ATP. Gly54 is a binding site for UMP. Positions 55 and 59 each coordinate ATP. Residues Asp74 and 135–142 (TGNPYFTT) each bind UMP. Residues Thr162, Asn163, Tyr168, and Asp171 each contribute to the ATP site.

This sequence belongs to the UMP kinase family. In terms of assembly, homohexamer.

Its subcellular location is the cytoplasm. It catalyses the reaction UMP + ATP = UDP + ADP. It functions in the pathway pyrimidine metabolism; CTP biosynthesis via de novo pathway; UDP from UMP (UMPK route): step 1/1. Its activity is regulated as follows. Inhibited by UTP. In terms of biological role, catalyzes the reversible phosphorylation of UMP to UDP. The polypeptide is Uridylate kinase (Nitrobacter hamburgensis (strain DSM 10229 / NCIMB 13809 / X14)).